We begin with the raw amino-acid sequence, 1188 residues long: DNA-directed RNA polymerase subunit beta (1188 aa).

This sequence belongs to the RNA polymerase beta chain family. As to quaternary structure, the RNAP catalytic core consists of 2 alpha, 1 beta, 1 beta' and 1 omega subunit. When a sigma factor is associated with the core the holoenzyme is formed, which can initiate transcription.

It catalyses the reaction RNA(n) + a ribonucleoside 5'-triphosphate = RNA(n+1) + diphosphate. DNA-dependent RNA polymerase catalyzes the transcription of DNA into RNA using the four ribonucleoside triphosphates as substrates. This Streptococcus gordonii (strain Challis / ATCC 35105 / BCRC 15272 / CH1 / DL1 / V288) protein is DNA-directed RNA polymerase subunit beta.